The following is a 333-amino-acid chain: Nuclear egress protein 1 (333 aa).

The interval serine 45–threonine 64 is disordered. A CCCH-type zinc finger spans residues cysteine 128–histidine 251.

It belongs to the herpesviridae NEC1 protein family. Forms a heterohexameric complex with NEC2. Interacts with capsid vertex specific component 2/CVC2; this interaction directs the capsid to the host inner nuclear membrane to initiate budding. In terms of processing, phosphorylated at serine residues in the N-terminus. This phosphorylation regulates the localization within the inner nuclear membrane.

The protein localises to the host nucleus inner membrane. In terms of biological role, plays an essential role in virion nuclear egress, the first step of virion release from infected cell. Within the host nucleus, NEC1 interacts with the newly formed capsid through the vertexes and directs it to the inner nuclear membrane by associating with NEC2. Induces the budding of the capsid at the inner nuclear membrane as well as its envelopment into the perinuclear space. There, the NEC1/NEC2 complex promotes the fusion of the enveloped capsid with the outer nuclear membrane and the subsequent release of the viral capsid into the cytoplasm where it will reach the secondary budding sites in the host Golgi or trans-Golgi network. This Varicella-zoster virus (strain Dumas) (HHV-3) protein is Nuclear egress protein 1.